The primary structure comprises 133 residues: Cytochrome c-type biogenesis protein CcmE (133 aa).

Residues 1 to 7 (MKRKHKR) lie on the Cytoplasmic side of the membrane. The chain crosses the membrane as a helical; Signal-anchor for type II membrane protein span at residues 8–28 (LLFIIVTFIIFGSSVVIVLNK). Over 29 to 133 (LRSNISFFFT…NYKPGKYRAK (105 aa)) the chain is Periplasmic. Heme contacts are provided by His121 and Tyr125.

The protein belongs to the CcmE/CycJ family.

Its subcellular location is the cell inner membrane. Its function is as follows. Heme chaperone required for the biogenesis of c-type cytochromes. Transiently binds heme delivered by CcmC and transfers the heme to apo-cytochromes in a process facilitated by CcmF and CcmH. In Ehrlichia canis (strain Jake), this protein is Cytochrome c-type biogenesis protein CcmE.